Consider the following 351-residue polypeptide: Selenide, water dikinase (351 aa).

The active site involves C20. Residues K23 and 51-53 each bind ATP; that span reads TKD. D54 contacts Mg(2+). ATP is bound by residues D71, D94, and 142 to 144; that span reads GHS. D94 is a binding site for Mg(2+). D230 is a Mg(2+) binding site.

The protein belongs to the selenophosphate synthase 1 family. Class I subfamily. Homodimer. Mg(2+) serves as cofactor.

The enzyme catalyses hydrogenselenide + ATP + H2O = selenophosphate + AMP + phosphate + 2 H(+). Synthesizes selenophosphate from selenide and ATP. The sequence is that of Selenide, water dikinase from Pasteurella multocida (strain Pm70).